Reading from the N-terminus, the 152-residue chain is Transcriptional repressor NrdR (152 aa).

A zinc finger spans residues 3-34 (CAFCGNPDTQVIDSRVSEDGSSIRRRRRCPAC). One can recognise an ATP-cone domain in the interval 49-139 (PQVVKTAGHR…VYRSFQDISE (91 aa)).

This sequence belongs to the NrdR family. Zn(2+) is required as a cofactor.

Functionally, negatively regulates transcription of bacterial ribonucleotide reductase nrd genes and operons by binding to NrdR-boxes. The polypeptide is Transcriptional repressor NrdR (Chromobacterium violaceum (strain ATCC 12472 / DSM 30191 / JCM 1249 / CCUG 213 / NBRC 12614 / NCIMB 9131 / NCTC 9757 / MK)).